Reading from the N-terminus, the 246-residue chain is Pyridoxine 5'-phosphate synthase (246 aa).

Residue asparagine 7 participates in 3-amino-2-oxopropyl phosphate binding. 9 to 10 (DH) contributes to the 1-deoxy-D-xylulose 5-phosphate binding site. 3-amino-2-oxopropyl phosphate is bound at residue arginine 18. The Proton acceptor role is filled by histidine 43. 1-deoxy-D-xylulose 5-phosphate-binding residues include arginine 45 and histidine 50. The active-site Proton acceptor is the glutamate 70. 1-deoxy-D-xylulose 5-phosphate is bound at residue threonine 100. Histidine 190 acts as the Proton donor in catalysis. 3-amino-2-oxopropyl phosphate contacts are provided by residues glycine 191 and 212–213 (GH).

The protein belongs to the PNP synthase family. In terms of assembly, homooctamer; tetramer of dimers.

It is found in the cytoplasm. The catalysed reaction is 3-amino-2-oxopropyl phosphate + 1-deoxy-D-xylulose 5-phosphate = pyridoxine 5'-phosphate + phosphate + 2 H2O + H(+). Its pathway is cofactor biosynthesis; pyridoxine 5'-phosphate biosynthesis; pyridoxine 5'-phosphate from D-erythrose 4-phosphate: step 5/5. Catalyzes the complicated ring closure reaction between the two acyclic compounds 1-deoxy-D-xylulose-5-phosphate (DXP) and 3-amino-2-oxopropyl phosphate (1-amino-acetone-3-phosphate or AAP) to form pyridoxine 5'-phosphate (PNP) and inorganic phosphate. The sequence is that of Pyridoxine 5'-phosphate synthase from Bordetella petrii (strain ATCC BAA-461 / DSM 12804 / CCUG 43448).